A 267-amino-acid chain; its full sequence is Tryptophan synthase alpha chain (267 aa).

Active-site proton acceptor residues include Glu-49 and Asp-60.

Belongs to the TrpA family. In terms of assembly, tetramer of two alpha and two beta chains.

It carries out the reaction (1S,2R)-1-C-(indol-3-yl)glycerol 3-phosphate + L-serine = D-glyceraldehyde 3-phosphate + L-tryptophan + H2O. The protein operates within amino-acid biosynthesis; L-tryptophan biosynthesis; L-tryptophan from chorismate: step 5/5. The alpha subunit is responsible for the aldol cleavage of indoleglycerol phosphate to indole and glyceraldehyde 3-phosphate. The chain is Tryptophan synthase alpha chain from Chloroflexus aggregans (strain MD-66 / DSM 9485).